The following is a 388-amino-acid chain: Probable Na(+)/H(+) antiporter 3 (388 aa).

12 consecutive transmembrane segments (helical) span residues 2-22 (ESYY…PNLL), 27-47 (IPAI…GLNI), 53-73 (TLKI…GLEV), 81-101 (EFKN…VGGY), 102-122 (LIGQ…VIFA), 146-166 (IILS…SVVI), 175-195 (VGTF…AIPS), 215-235 (VLFI…HPIV), 263-283 (AIGY…ETNI), 294-314 (LLLI…FIAL), 325-345 (TIGG…ASIG), and 354-374 (EIFV…PIVV).

The protein belongs to the monovalent cation:proton antiporter 1 (CPA1) transporter (TC 2.A.36) family.

It localises to the cell membrane. This is probably a Na(+)/H(+) antiporter. In Methanocaldococcus jannaschii (strain ATCC 43067 / DSM 2661 / JAL-1 / JCM 10045 / NBRC 100440) (Methanococcus jannaschii), this protein is Probable Na(+)/H(+) antiporter 3.